Consider the following 397-residue polypeptide: Elongation factor Tu (397 aa).

One can recognise a tr-type G domain in the interval 10–207; that stretch reads KPHCNIGTIG…AVDEYIPQPE (198 aa). Positions 19–26 are G1; that stretch reads GHVDHGKT. 19–26 contributes to the GTP binding site; that stretch reads GHVDHGKT. Position 26 (T26) interacts with Mg(2+). Residues 61 to 65 form a G2 region; it reads GITIS. The segment at 82-85 is G3; it reads DCPG. GTP contacts are provided by residues 82–86 and 137–140; these read DCPGH and NKVD. The G4 stretch occupies residues 137 to 140; sequence NKVD. The segment at 175–177 is G5; sequence SAL.

The protein belongs to the TRAFAC class translation factor GTPase superfamily. Classic translation factor GTPase family. EF-Tu/EF-1A subfamily. In terms of assembly, monomer.

It is found in the cytoplasm. The catalysed reaction is GTP + H2O = GDP + phosphate + H(+). Its function is as follows. GTP hydrolase that promotes the GTP-dependent binding of aminoacyl-tRNA to the A-site of ribosomes during protein biosynthesis. The chain is Elongation factor Tu from Zymomonas mobilis subsp. mobilis (strain ATCC 31821 / ZM4 / CP4).